The sequence spans 432 residues: Glutamyl-tRNA reductase (432 aa).

Residues 55–58 (TCNR), Ser114, 119–121 (ETQ), and Gln125 each bind substrate. The Nucleophile role is filled by Cys56. 194-199 (GAGEMI) contributes to the NADP(+) binding site.

Belongs to the glutamyl-tRNA reductase family. As to quaternary structure, homodimer.

It carries out the reaction (S)-4-amino-5-oxopentanoate + tRNA(Glu) + NADP(+) = L-glutamyl-tRNA(Glu) + NADPH + H(+). It functions in the pathway porphyrin-containing compound metabolism; protoporphyrin-IX biosynthesis; 5-aminolevulinate from L-glutamyl-tRNA(Glu): step 1/2. In terms of biological role, catalyzes the NADPH-dependent reduction of glutamyl-tRNA(Glu) to glutamate 1-semialdehyde (GSA). The polypeptide is Glutamyl-tRNA reductase (Burkholderia thailandensis (strain ATCC 700388 / DSM 13276 / CCUG 48851 / CIP 106301 / E264)).